The primary structure comprises 277 residues: MSMKDLKISQLIVKHYFQKLNDVLNVDVAIAGCGPSALALATELAKNGRKVAIFEAKNEPGGGIWGGGMMFNELVLESELEWYLKEHHIKYKKEDEFIVVDAVHFASAMLYNATKNGAYIFNNVFVEDLVMYNERISGVVINWMPTIKEKLHVDPITVVAKFTVDGTGHPANLVRLLSKRGIINSVKGSSENLCSCGVVEYEFPMDAENGEKFVVENTKEIYPGLYVMGMAAVSVGGGPRMGPIFGGMIMSGLRAAELIEEELKRIETSEDKMWVRV.

NAD(+) contacts are provided by residues S36, G63, V126, and 152–154; that span reads HVD. Positions 154 and 169 each coordinate Fe cation. M230 is an NAD(+) binding site. Position 240 (R240) interacts with glycine.

Belongs to the THI4 family. Homooctamer; tetramer of dimers. Fe(2+) serves as cofactor.

It catalyses the reaction hydrogen sulfide + glycine + NAD(+) = ADP-5-ethyl-4-methylthiazole-2-carboxylate + nicotinamide + 3 H2O + H(+). It participates in cofactor biosynthesis; thiamine diphosphate biosynthesis. Its function is as follows. Involved in the biosynthesis of the thiazole moiety of thiamine. Catalyzes the conversion of NAD and glycine to adenosine diphosphate 5-(2-hydroxyethyl)-4-methylthiazole-2-carboxylate (ADT), an adenylated thiazole intermediate, using free sulfide as a source of sulfur. The sequence is that of Thiamine thiazole synthase from Fervidobacterium nodosum (strain ATCC 35602 / DSM 5306 / Rt17-B1).